Reading from the N-terminus, the 405-residue chain is L-carnitine CoA-transferase (405 aa).

Lys97 and Arg104 together coordinate CoA. Residue Asp169 is the Nucleophile of the active site.

The protein belongs to the CoA-transferase III family. CaiB subfamily. As to quaternary structure, homodimer.

The protein localises to the cytoplasm. The enzyme catalyses crotonobetainyl-CoA + (R)-carnitine = crotonobetaine + (R)-carnitinyl-CoA. The catalysed reaction is 4-(trimethylamino)butanoyl-CoA + (R)-carnitine = (R)-carnitinyl-CoA + 4-(trimethylamino)butanoate. It functions in the pathway amine and polyamine metabolism; carnitine metabolism. In terms of biological role, catalyzes the reversible transfer of the CoA moiety from gamma-butyrobetainyl-CoA to L-carnitine to generate L-carnitinyl-CoA and gamma-butyrobetaine. Is also able to catalyze the reversible transfer of the CoA moiety from gamma-butyrobetainyl-CoA or L-carnitinyl-CoA to crotonobetaine to generate crotonobetainyl-CoA. The chain is L-carnitine CoA-transferase from Salmonella choleraesuis (strain SC-B67).